A 676-amino-acid polypeptide reads, in one-letter code: DNA ligase (676 aa).

NAD(+) contacts are provided by residues 35-39, 84-85, and Glu-118; these read DYEFD and SL. Residue Lys-120 is the N6-AMP-lysine intermediate of the active site. NAD(+) contacts are provided by Arg-141, Glu-184, Lys-299, and Lys-323. Zn(2+)-binding residues include Cys-417, Cys-420, Cys-435, and Cys-441. In terms of domain architecture, BRCT spans 600–676; the sequence is LINRNFEGVN…ISEDEFNAML (77 aa).

This sequence belongs to the NAD-dependent DNA ligase family. LigA subfamily. It depends on Mg(2+) as a cofactor. Requires Mn(2+) as cofactor.

It carries out the reaction NAD(+) + (deoxyribonucleotide)n-3'-hydroxyl + 5'-phospho-(deoxyribonucleotide)m = (deoxyribonucleotide)n+m + AMP + beta-nicotinamide D-nucleotide.. DNA ligase that catalyzes the formation of phosphodiester linkages between 5'-phosphoryl and 3'-hydroxyl groups in double-stranded DNA using NAD as a coenzyme and as the energy source for the reaction. It is essential for DNA replication and repair of damaged DNA. The chain is DNA ligase from Chlorobium phaeobacteroides (strain DSM 266 / SMG 266 / 2430).